Reading from the N-terminus, the 70-residue chain is Small ribosomal subunit protein bS21 (70 aa).

The protein belongs to the bacterial ribosomal protein bS21 family.

This chain is Small ribosomal subunit protein bS21, found in Herminiimonas arsenicoxydans.